A 111-amino-acid polypeptide reads, in one-letter code: Large ribosomal subunit protein uL24 (111 aa).

Residues 85–111 are disordered; that stretch reads NTNDPRRKDIINRKASRQKEEQGGKAQ. The span at 88–111 shows a compositional bias: basic and acidic residues; sequence DPRRKDIINRKASRQKEEQGGKAQ.

The protein belongs to the universal ribosomal protein uL24 family. Part of the 50S ribosomal subunit.

Its function is as follows. One of two assembly initiator proteins, it binds directly to the 5'-end of the 23S rRNA, where it nucleates assembly of the 50S subunit. Located at the polypeptide exit tunnel on the outside of the subunit. The polypeptide is Large ribosomal subunit protein uL24 (Metallosphaera sedula (strain ATCC 51363 / DSM 5348 / JCM 9185 / NBRC 15509 / TH2)).